Consider the following 576-residue polypeptide: Arginine--tRNA ligase (576 aa).

A 'HIGH' region motif is present at residues 122–132 (PNVAKEMHVGH).

Belongs to the class-I aminoacyl-tRNA synthetase family. Monomer.

The protein localises to the cytoplasm. It carries out the reaction tRNA(Arg) + L-arginine + ATP = L-arginyl-tRNA(Arg) + AMP + diphosphate. The polypeptide is Arginine--tRNA ligase (Pectobacterium atrosepticum (strain SCRI 1043 / ATCC BAA-672) (Erwinia carotovora subsp. atroseptica)).